We begin with the raw amino-acid sequence, 356 residues long: DNA polymerase IV (356 aa).

The region spanning 6–186 (IVHIDMDAFY…LPVDAFHGIG (181 aa)) is the UmuC domain. Mg(2+)-binding residues include Asp10 and Asp104. Glu105 is a catalytic residue.

Belongs to the DNA polymerase type-Y family. In terms of assembly, monomer. Mg(2+) serves as cofactor.

It is found in the cytoplasm. It carries out the reaction DNA(n) + a 2'-deoxyribonucleoside 5'-triphosphate = DNA(n+1) + diphosphate. In terms of biological role, poorly processive, error-prone DNA polymerase involved in untargeted mutagenesis. Copies undamaged DNA at stalled replication forks, which arise in vivo from mismatched or misaligned primer ends. These misaligned primers can be extended by PolIV. Exhibits no 3'-5' exonuclease (proofreading) activity. May be involved in translesional synthesis, in conjunction with the beta clamp from PolIII. The chain is DNA polymerase IV from Gluconobacter oxydans (strain 621H) (Gluconobacter suboxydans).